Here is a 586-residue protein sequence, read N- to C-terminus: Lipoprotein LpqB (586 aa).

A signal peptide spans 1 to 17 (MVRSVFALVFAAVLLGG). A lipid anchor (N-palmitoyl cysteine) is attached at C18. Residue C18 is the site of S-diacylglycerol cysteine attachment. The interval 26–45 (APQAIGTVERPAPSNLPKPI) is disordered.

The protein belongs to the LpqB lipoprotein family.

Its subcellular location is the cell membrane. In Mycobacterium ulcerans (strain Agy99), this protein is Lipoprotein LpqB.